Reading from the N-terminus, the 200-residue chain is Outer-membrane lipoprotein carrier protein (200 aa).

The first 18 residues, 1–18 (MIGLFLAAPLVLSSAVWA), serve as a signal peptide directing secretion.

It belongs to the LolA family. In terms of assembly, monomer.

It localises to the periplasm. Participates in the translocation of lipoproteins from the inner membrane to the outer membrane. Only forms a complex with a lipoprotein if the residue after the N-terminal Cys is not an aspartate (The Asp acts as a targeting signal to indicate that the lipoprotein should stay in the inner membrane). The polypeptide is Outer-membrane lipoprotein carrier protein (Photobacterium profundum (strain SS9)).